The chain runs to 105 residues: Ferredoxin--nitrite reductase, chloroplastic (105 aa).

Residues Cys-28 and Cys-32 each contribute to the [4Fe-4S] cluster site. Cys-32 is a binding site for siroheme.

The protein belongs to the nitrite and sulfite reductase 4Fe-4S domain family. In terms of assembly, monomer. Siroheme serves as cofactor. The cofactor is [4Fe-4S] cluster. Highest expression in roots and hypocotyls. Some expression in cotyledonary whorls.

The protein localises to the plastid. Its subcellular location is the chloroplast. It carries out the reaction 6 oxidized [2Fe-2S]-[ferredoxin] + NH4(+) + 2 H2O = nitrite + 6 reduced [2Fe-2S]-[ferredoxin] + 8 H(+). Its pathway is nitrogen metabolism; nitrate reduction (assimilation). This chain is Ferredoxin--nitrite reductase, chloroplastic (NIR), found in Pinus sylvestris (Scotch pine).